The primary structure comprises 195 residues: Granulocyte colony-stimulating factor (195 aa).

The N-terminal stretch at 1–21 is a signal peptide; the sequence is MKLMALQLLLWHIALWMVPEA. Disulfide bonds link cysteine 57–cysteine 63 and cysteine 85–cysteine 95. The O-linked (GalNAc...) threonine glycan is linked to threonine 154.

It belongs to the IL-6 superfamily. As to quaternary structure, monomer. In terms of processing, O-glycosylated.

It localises to the secreted. Granulocyte/macrophage colony-stimulating factors are cytokines that act in hematopoiesis by controlling the production, differentiation, and function of 2 related white cell populations of the blood, the granulocytes and the monocytes-macrophages. This CSF induces granulocytes. The sequence is that of Granulocyte colony-stimulating factor (CSF3) from Sus scrofa (Pig).